We begin with the raw amino-acid sequence, 466 residues long: DNA polymerase delta subunit 3 (466 aa).

Alanine 2 is modified (N-acetylalanine). Disordered regions lie at residues 145–218 (PAES…KEVM) and 255–466 (EQEV…FQRK). 3 stretches are compositionally biased toward basic and acidic residues: residues 205–218 (DANK…KEVM), 255–265 (EQEVKEEKKVE), and 281–297 (DLKK…MQQK). Residue lysine 259 forms a Glycyl lysine isopeptide (Lys-Gly) (interchain with G-Cter in SUMO); alternate linkage. A Glycyl lysine isopeptide (Lys-Gly) (interchain with G-Cter in SUMO2); alternate cross-link involves residue lysine 259. Lysine 262 is covalently cross-linked (Glycyl lysine isopeptide (Lys-Gly) (interchain with G-Cter in SUMO2)). Residue serine 308 is modified to Phosphoserine. Residues 350–360 (PSPPPPSPSPE) are compositionally biased toward pro residues. Phosphoserine occurs at positions 407 and 409. Residue threonine 411 is modified to Phosphothreonine. At serine 413 the chain carries Phosphoserine. The segment covering 432-441 (VKKEPKEERK) has biased composition (basic and acidic residues). Lysine 433 is covalently cross-linked (Glycyl lysine isopeptide (Lys-Gly) (interchain with G-Cter in SUMO); alternate). Residue lysine 433 forms a Glycyl lysine isopeptide (Lys-Gly) (interchain with G-Cter in SUMO2); alternate linkage. The PIP-box motif lies at 456–463 (QVAITGFF).

As to quaternary structure, component of both the DNA polymerase delta and DNA polymerase zeta complexes. The tetrameric DNA polymerase delta complex (Pol-delta4), which consists of POLD1/p125, POLD2/p50, POLD3/p66/p68 and POLD4/p12, with POLD1 bearing DNA polymerase and 3' to 5' proofreading exonuclease activities. Within this complex, directly interacts with POLD2. Following stress caused by DNA damaging agents or by replication stress, POLD4 is degraded and Pol-delta4 is converted into a trimeric form of the complex (Pol-delta3), which consists of POLD1, POLD2 and POLD3. Pol-delta3 is the major form occurring at S phase replication sites, as well as DNA damage sites. Directly interacts with PCNA, as do POLD1 and POLD4; this interaction stimulates Pol-delta polymerase activity. Component of the DNA polymerase zeta complex (POLZ), which consists of REV3L, MAD2L2, POLD2 and POLD3, with REV3L bearing DNA polymerase catalytic activity. The DNA polymerase delta complex interacts with POLDIP2; this interaction is probably mediated through direct binding to POLD2. Post-translationally, ubiquitinated, but not targeted to the proteasome. Sumoylated. Sumoylation by SUMO3 may be predominant.

Its subcellular location is the cytoplasm. It is found in the nucleus. Functionally, accessory component of both the DNA polymerase delta complex and the DNA polymerase zeta complex. As a component of the trimeric and tetrameric DNA polymerase delta complexes (Pol-delta3 and Pol-delta4, respectively), plays a role in high fidelity genome replication, including in lagging strand synthesis, and repair. Required for optimal Pol-delta activity. Stabilizes the Pol-delta complex and plays a major role in Pol-delta stimulation by PCNA. Pol-delta3 and Pol-delta4 are characterized by the absence or the presence of POLD4. They exhibit differences in catalytic activity. Most notably, Pol-delta3 shows higher proofreading activity than Pol-delta4. Although both Pol-delta3 and Pol-delta4 process Okazaki fragments in vitro, Pol-delta3 may also be better suited to fulfill this task, exhibiting near-absence of strand displacement activity compared to Pol-delta4 and stalling on encounter with the 5'-blocking oligonucleotides. Pol-delta3 idling process may avoid the formation of a gap, while maintaining a nick that can be readily ligated. Along with DNA polymerase kappa, DNA polymerase delta carries out approximately half of nucleotide excision repair (NER) synthesis following UV irradiation. In this context, POLD3, along with PCNA and RFC1-replication factor C complex, is required to recruit POLD1, the catalytic subunit of the polymerase delta complex, to DNA damage sites. Under conditions of DNA replication stress, required for the repair of broken replication forks through break-induced replication (BIR). Involved in the translesion synthesis (TLS) of templates carrying O6-methylguanine or abasic sites performed by Pol-delta4, independently of DNA polymerase zeta (REV3L) or eta (POLH). Facilitates abasic site bypass by DNA polymerase delta by promoting extension from the nucleotide inserted opposite the lesion. Also involved in TLS, as a component of the tetrameric DNA polymerase zeta complex. Along with POLD2, dramatically increases the efficiency and processivity of DNA synthesis of the DNA polymerase zeta complex compared to the minimal zeta complex, consisting of only REV3L and REV7. The protein is DNA polymerase delta subunit 3 (POLD3) of Bos taurus (Bovine).